Reading from the N-terminus, the 103-residue chain is Histone H4.1 (103 aa).

A compositionally biased stretch (gly residues) spans 1-14; that stretch reads MSGRGKGGKGLGKG. The disordered stretch occupies residues 1 to 20; that stretch reads MSGRGKGGKGLGKGGAKRHR. Lysine 6 bears the N6-acetyl-N6-methyllysine; alternate mark. An N6-methyllysine; alternate mark is found at lysine 6, lysine 9, and lysine 13. Position 13 is an N6-acetyl-N6-methyllysine; alternate (lysine 13). A DNA-binding region spans residues 17 to 21; sequence KRHRK. Lysine 92 carries the N6-glutaryllysine modification.

This sequence belongs to the histone H4 family. In terms of assembly, the nucleosome is a histone octamer containing two molecules each of H2A, H2B, H3 and H4 assembled in one H3-H4 heterotetramer and two H2A-H2B heterodimers. The octamer wraps approximately 147 bp of DNA. In terms of processing, glutarylation at Lys-92 (H4K91glu) destabilizes nucleosomes by promoting dissociation of the H2A-H2B dimers from nucleosomes.

It localises to the nucleus. Its subcellular location is the chromosome. Its function is as follows. Core component of nucleosome. Nucleosomes wrap and compact DNA into chromatin, limiting DNA accessibility to the cellular machineries which require DNA as a template. Histones thereby play a central role in transcription regulation, DNA repair, DNA replication and chromosomal stability. DNA accessibility is regulated via a complex set of post-translational modifications of histones, also called histone code, and nucleosome remodeling. The chain is Histone H4.1 (HHF1) from Eremothecium gossypii (strain ATCC 10895 / CBS 109.51 / FGSC 9923 / NRRL Y-1056) (Yeast).